The sequence spans 191 residues: Xanthine phosphoribosyltransferase (191 aa).

2 residues coordinate xanthine: Leu-20 and Asn-27. A 5-phospho-alpha-D-ribose 1-diphosphate-binding site is contributed by 128 to 132; the sequence is ANGQA. A xanthine-binding site is contributed by Lys-156.

The protein belongs to the purine/pyrimidine phosphoribosyltransferase family. Xpt subfamily. As to quaternary structure, homodimer.

It is found in the cytoplasm. The catalysed reaction is XMP + diphosphate = xanthine + 5-phospho-alpha-D-ribose 1-diphosphate. It participates in purine metabolism; XMP biosynthesis via salvage pathway; XMP from xanthine: step 1/1. Functionally, converts the preformed base xanthine, a product of nucleic acid breakdown, to xanthosine 5'-monophosphate (XMP), so it can be reused for RNA or DNA synthesis. This Limosilactobacillus reuteri (strain DSM 20016) (Lactobacillus reuteri) protein is Xanthine phosphoribosyltransferase.